The chain runs to 388 residues: Succinate--CoA ligase [ADP-forming] subunit beta (388 aa).

The 236-residue stretch at 9 to 244 (KQLFAEYGLP…PSQDDPREAH (236 aa)) folds into the ATP-grasp domain. Residues Lys46, 53–55 (GRG), Glu99, Thr102, and Glu107 each bind ATP. Mg(2+) contacts are provided by Asn199 and Asp213. Substrate contacts are provided by residues Asn264 and 321–323 (GIV).

The protein belongs to the succinate/malate CoA ligase beta subunit family. Heterotetramer of two alpha and two beta subunits. The cofactor is Mg(2+).

It carries out the reaction succinate + ATP + CoA = succinyl-CoA + ADP + phosphate. It catalyses the reaction GTP + succinate + CoA = succinyl-CoA + GDP + phosphate. The protein operates within carbohydrate metabolism; tricarboxylic acid cycle; succinate from succinyl-CoA (ligase route): step 1/1. Its function is as follows. Succinyl-CoA synthetase functions in the citric acid cycle (TCA), coupling the hydrolysis of succinyl-CoA to the synthesis of either ATP or GTP and thus represents the only step of substrate-level phosphorylation in the TCA. The beta subunit provides nucleotide specificity of the enzyme and binds the substrate succinate, while the binding sites for coenzyme A and phosphate are found in the alpha subunit. The sequence is that of Succinate--CoA ligase [ADP-forming] subunit beta from Aeromonas hydrophila subsp. hydrophila (strain ATCC 7966 / DSM 30187 / BCRC 13018 / CCUG 14551 / JCM 1027 / KCTC 2358 / NCIMB 9240 / NCTC 8049).